Here is a 694-residue protein sequence, read N- to C-terminus: uncharacterized protein (694 aa).

The 152-residue stretch at 17–168 (DAFLYVRQSS…GGILNKARRG (152 aa)) folds into the Resolvase/invertase-type recombinase catalytic domain. The active-site O-(5'-phospho-DNA)-serine intermediate is Ser25. Residues 175-316 (PIGLVYTPDA…QAALEQNATG (142 aa)) constitute a DNA-binding region (recombinase). The helical transmembrane segment at 386 to 406 (AVSALLLEVMAPAAIDVALAV) threads the bilayer.

It localises to the membrane. This is an uncharacterized protein from Sinorhizobium fredii (strain NBRC 101917 / NGR234).